The following is a 994-amino-acid chain: Chromatin modification-related protein vid21 (994 aa).

Disordered regions lie at residues 122–275 and 288–308; these read PDNL…APPV and PKVD…ENDV. 5 stretches are compositionally biased toward basic and acidic residues: residues 158–171, 178–191, 204–233, 254–265, and 288–305; these read TIHK…KETI, KEVE…EEKG, LTEE…KEHE, VESKEVKKKEVS, and PKVD…KVTE. Residues Ser298 and Ser378 each carry the phosphoserine modification. One can recognise an HSA domain in the interval 475 to 548; it reads PKRQNEMPRL…SKNKKPYMQE (74 aa). Positions 671-693 are disordered; sequence SFMEKKARSDENQLDGNKIKDDN. Residues 672 to 693 show a composition bias toward basic and acidic residues; that stretch reads FMEKKARSDENQLDGNKIKDDN. In terms of domain architecture, Myb-like spans 713–773; the sequence is KDIRPEAPWL…DCFERWIQVD (61 aa). 2 disordered regions span residues 857 to 880 and 975 to 994; these read TMTK…PSPL and EQIH…ERTQ. Residues 880–912 are a coiled coil; it reads LELSRLKSEREAQIQQIQAQRNFAQLQSQNRAL.

It belongs to the EAF1 family. Component of the NuA4 histone acetyltransferase complex.

It localises to the nucleus. Its function is as follows. Component of the NuA4 histone acetyltransferase complex which is involved in transcriptional activation of selected genes principally by acetylation of nucleosomal histone H4 and H2A. The NuA4 complex is also involved in DNA repair. In Schizosaccharomyces pombe (strain 972 / ATCC 24843) (Fission yeast), this protein is Chromatin modification-related protein vid21 (vid21).